Here is a 171-residue protein sequence, read N- to C-terminus: Dual specificity protein phosphatase OPG106 (171 aa).

Belongs to the protein-tyrosine phosphatase family. Non-receptor class dual specificity subfamily. In terms of assembly, homodimer.

It localises to the virion. The protein localises to the host cytoplasm. The enzyme catalyses O-phospho-L-tyrosyl-[protein] + H2O = L-tyrosyl-[protein] + phosphate. The catalysed reaction is O-phospho-L-seryl-[protein] + H2O = L-seryl-[protein] + phosphate. Functionally, serine/tyrosine phosphatase which down-regulates cellular antiviral response by dephosphorylating activated host STAT1 and blocking interferon (IFN)-stimulated innate immune responses. Dephosphorylates the OPG144 protein. This is Dual specificity protein phosphatase OPG106 (OPG106) from Monkeypox virus.